Here is an 84-residue protein sequence, read N- to C-terminus: Small ribosomal subunit protein bS18 (84 aa).

Belongs to the bacterial ribosomal protein bS18 family. Part of the 30S ribosomal subunit. Forms a tight heterodimer with protein bS6.

Its function is as follows. Binds as a heterodimer with protein bS6 to the central domain of the 16S rRNA, where it helps stabilize the platform of the 30S subunit. The polypeptide is Small ribosomal subunit protein bS18 (Vesicomyosocius okutanii subsp. Calyptogena okutanii (strain HA)).